We begin with the raw amino-acid sequence, 350 residues long: Quinone oxidoreductase-like protein 2 (350 aa).

At lysine 36 the chain carries N6-acetyllysine. Lysine 201 is subject to N6-succinyllysine. N6-acetyllysine is present on residues lysine 302 and lysine 328.

Belongs to the zinc-containing alcohol dehydrogenase family. Quinone oxidoreductase subfamily.

This Mus musculus (Mouse) protein is Quinone oxidoreductase-like protein 2.